Consider the following 865-residue polypeptide: Valine--tRNA ligase (865 aa).

The 'HIGH' region motif lies at 43–53; sequence PNITGRIHMGH. Positions 523–527 match the 'KMSKS' region motif; that stretch reads KMSKS. Position 526 (Lys-526) interacts with ATP. Positions 797–865 form a coiled coil; that stretch reads GLIDFEKEKE…RLESILRDLE (69 aa).

The protein belongs to the class-I aminoacyl-tRNA synthetase family. ValS type 1 subfamily. As to quaternary structure, monomer.

The protein localises to the cytoplasm. The enzyme catalyses tRNA(Val) + L-valine + ATP = L-valyl-tRNA(Val) + AMP + diphosphate. Functionally, catalyzes the attachment of valine to tRNA(Val). As ValRS can inadvertently accommodate and process structurally similar amino acids such as threonine, to avoid such errors, it has a 'posttransfer' editing activity that hydrolyzes mischarged Thr-tRNA(Val) in a tRNA-dependent manner. This Thermotoga maritima (strain ATCC 43589 / DSM 3109 / JCM 10099 / NBRC 100826 / MSB8) protein is Valine--tRNA ligase.